The sequence spans 143 residues: 6,7-dimethyl-8-ribityllumazine synthase (143 aa).

5-amino-6-(D-ribitylamino)uracil contacts are provided by residues phenylalanine 13, 45–47, and 69–71; these read TFD and CVI. (2S)-2-hydroxy-3-oxobutyl phosphate is bound at residue 74–75; the sequence is ET. The Proton donor role is filled by histidine 77. Leucine 102 lines the 5-amino-6-(D-ribitylamino)uracil pocket. A (2S)-2-hydroxy-3-oxobutyl phosphate-binding site is contributed by arginine 117.

It belongs to the DMRL synthase family.

The enzyme catalyses (2S)-2-hydroxy-3-oxobutyl phosphate + 5-amino-6-(D-ribitylamino)uracil = 6,7-dimethyl-8-(1-D-ribityl)lumazine + phosphate + 2 H2O + H(+). Its pathway is cofactor biosynthesis; riboflavin biosynthesis; riboflavin from 2-hydroxy-3-oxobutyl phosphate and 5-amino-6-(D-ribitylamino)uracil: step 1/2. Its function is as follows. Catalyzes the formation of 6,7-dimethyl-8-ribityllumazine by condensation of 5-amino-6-(D-ribitylamino)uracil with 3,4-dihydroxy-2-butanone 4-phosphate. This is the penultimate step in the biosynthesis of riboflavin. In Archaeoglobus fulgidus (strain ATCC 49558 / DSM 4304 / JCM 9628 / NBRC 100126 / VC-16), this protein is 6,7-dimethyl-8-ribityllumazine synthase.